Reading from the N-terminus, the 368-residue chain is Phosphate acyltransferase (368 aa).

Residues 337 to 368 (LEQAARDASGAGQASPIAGQPAEPYAAQSSKA) form a disordered region.

The protein belongs to the PlsX family. In terms of assembly, homodimer. Probably interacts with PlsY.

The protein localises to the cytoplasm. It catalyses the reaction a fatty acyl-[ACP] + phosphate = an acyl phosphate + holo-[ACP]. The protein operates within lipid metabolism; phospholipid metabolism. In terms of biological role, catalyzes the reversible formation of acyl-phosphate (acyl-PO(4)) from acyl-[acyl-carrier-protein] (acyl-ACP). This enzyme utilizes acyl-ACP as fatty acyl donor, but not acyl-CoA. The chain is Phosphate acyltransferase from Paraburkholderia phytofirmans (strain DSM 17436 / LMG 22146 / PsJN) (Burkholderia phytofirmans).